A 329-amino-acid chain; its full sequence is Olfactory receptor 10J3 (329 aa).

The Extracellular segment spans residues 1 to 26 (MPKLNSTFVTEFLFEGFSSFRRQHKL). N5 is a glycosylation site (N-linked (GlcNAc...) asparagine). The chain crosses the membrane as a helical span at residues 27–47 (VFFVVFLTLYLLTLSGNVIIM). The Cytoplasmic segment spans residues 48-55 (TIIRLDHH). A helical transmembrane segment spans residues 56-76 (LHTPMYFFLCMLSISETCYTV). The Extracellular portion of the chain corresponds to 77–100 (AIIPHMLSGLLNPHQPIATQSCAT). C98 and C190 are oxidised to a cystine. A helical membrane pass occupies residues 101 to 121 (QLFFYLTFGINNCFLLTVMGY). Over 122–140 (DRYVAICNPLRYSVIMGKR) the chain is Cytoplasmic. The chain crosses the membrane as a helical span at residues 141-161 (ACIQLASGSLGIGLGMAIVQV). Residues 162–198 (TSVFGLPFCDAFVISHFFCDVRHLLKLACTDTTVNEI) are Extracellular-facing. The chain crosses the membrane as a helical span at residues 199–218 (INFVVSVCVLVLPMGLVFIS). The Cytoplasmic portion of the chain corresponds to 219 to 238 (YVLIISTILKIASAEGQKKA). A helical transmembrane segment spans residues 239-259 (FATCASHLTVVIIHYGCASII). The Extracellular portion of the chain corresponds to 260–272 (YLKPKSQSSLGQD). The helical transmembrane segment at 273–293 (RLISVTYTHHSPTEPCCVQPE) threads the bilayer. At 294-329 (EQGGQRCSAQSRGAKNSVSLMKRGCEGFSFAFINMY) the chain is on the cytoplasmic side.

This sequence belongs to the G-protein coupled receptor 1 family.

Its subcellular location is the cell membrane. In terms of biological role, odorant receptor. In Homo sapiens (Human), this protein is Olfactory receptor 10J3 (OR10J3).